The chain runs to 687 residues: Adhesion G-protein coupled receptor G1 (687 aa).

Residues 1-25 (MTAQSLLQTTLFLLSLLFLVQGAHG) form the signal peptide. 26–33 (RGHREDFR) lines the heparin pocket. The Extracellular portion of the chain corresponds to 26–402 (RGHREDFRFC…VEVDAVHKHY (377 aa)). Intrachain disulfides connect C35-C91 and C121-C177. N-linked (GlcNAc...) asparagine glycosylation is found at N39, N148, N156, and N171. Residue 190–200 (LKHPQKASRRP) coordinates heparin. A GAIN-B domain is found at 224 to 395 (DTVSFEEDRV…AVLMVSSVEV (172 aa)). N-linked (GlcNAc...) asparagine glycosylation is found at N234, N303, N324, and N341. Intrachain disulfides connect C346/C377 and C366/C379. A GPS region spans residues 346–395 (CVFWVEDPTLSNPGRWSSAGCETVRRETQTSCFCNHLTYFAVLMVSSVEV). Residues 384 to 397 (YFAVLMVSSVEVDA) are stachel. The chain crosses the membrane as a helical span at residues 403-423 (LSLLSYVGCVVSALACVVTIA). The Cytoplasmic portion of the chain corresponds to 424–442 (AYLCSRRKPRDYTIKVHMN). Residues 443 to 463 (LLLAVFLLDVSFLLSEPVALT) traverse the membrane as a helical segment. Residues 464–470 (GSQSGCR) are Extracellular-facing. A helical membrane pass occupies residues 471–491 (ASAIFLHFSLLACLSWMGLEG). At 492–512 (YNLYRLVVEVFGTYIPGYLLK) the chain is on the cytoplasmic side. A helical membrane pass occupies residues 513–533 (LSAMGWGFPIFLVTLVALVDV). Over 534–570 (DNYGPIILAVHRTPESVIYPSMCWIRDSLVSYITNLG) the chain is Extracellular. A helical transmembrane segment spans residues 571-591 (LFSLVFLFNMAMLGTMVVQIL). Residues 592–603 (RLRPHTQKWSHV) are Cytoplasmic-facing. A helical membrane pass occupies residues 604–624 (LTLLGLSLVLGLPWALIFFSF). Residues 625 to 630 (ASGTFQ) lie on the Extracellular side of the membrane. Residues 631-651 (LVVLYLFSIITSFQGFLIFLW) traverse the membrane as a helical segment. At 652–687 (YWSMRLQARGGPSPLKSNSDSARLPISTGSTSSSRI) the chain is on the cytoplasmic side. A disordered region spans residues 664–687 (SPLKSNSDSARLPISTGSTSSSRI). Residues 666 to 687 (LKSNSDSARLPISTGSTSSSRI) are compositionally biased toward polar residues.

The protein belongs to the G-protein coupled receptor 2 family. LN-TM7 subfamily. In terms of assembly, heterodimer of 2 chains generated by proteolytic processing; the large extracellular N-terminal fragment (ADGRG1 NT) and the membrane-bound C-terminal fragment (ADGRG1-CT) predominantly remain associated and non-covalently linked. ADGRG1 NT self-associates in a trans-trans manner; the homophilic interaction enhances receptor signaling. Interacts with TGM2. Interacts with heparin; leading to the reduction of ADGRG1 shedding. Interacts with COL3A1. Part of a GPCR-tetraspanin complex at least consisting of ADGRG1, CD81, eventually CD9, and GNA11 in which CD81 is enhancing the association of ADGRG1 with GNA11. Autoproteolytically cleaved into 2 fragments; the large extracellular N-terminal fragment (ADGRG1 NT) and the membrane-bound C-terminal fragment (ADGRG1 CT) predominantly remain associated and non-covalently linked. Shedding to yield the secreted ADGRG1 N-terminal fragment seems to involve metalloprotease(s). In terms of processing, ubiquitinated. Undergoes polyubiquitination upon activation.

It is found in the cell membrane. Its subcellular location is the secreted. The protein localises to the membrane raft. Forms a heterodimer of 2 chains generated by proteolytic processing that remain associated through non-covalent interactions mediated by the GAIN-B domain. In the inactivated receptor, the Stachel sequence (also named stalk) is embedded in the GAIN-B domain, where it adopts a beta-strand conformation. On activation, the Stachel moves into the 7 transmembrane region and adopts a twisted hook-shaped configuration that forms contacts within the receptor, leading to coupling of a G-alpha protein, which activates signaling. The cleaved GAIN-B and N-terminal domains can then dissociate from the rest of the receptor. In terms of biological role, adhesion G-protein coupled receptor (aGPCR) for steroid hormone 17alpha-hydroxypregnenolone (17-OH), which is involved in cell adhesion and cell-cell interactions. Ligand binding causes a conformation change that triggers signaling via guanine nucleotide-binding proteins (G proteins) and modulates the activity of downstream effectors, such as RhoA pathway. ADGRG1 is coupled to G(12) and/or G(13) G proteins (GNA12 and GNA13, respectively) and mediates the activation Rho small GTPases. Acts as a potent suppressor of ferroptosis: binding to 17-OH-binding initiates signaling that down-regulates CD36 and alleviates ferroptosis-induced liver injury. Ligand-binding also induces cell adhesion activity via association with proteins such as collagen III/COL3A1 and TGM2. Mediates cell matrix adhesion in developing neurons and hematopoietic stem cells. Involved in cortical development, specifically in maintenance of the pial basement membrane integrity and in cortical lamination: association with COL3A1 in the developing brain inhibits neuronal migration via activation of the RhoA pathway. Together with TGM2, acts as a regulator of myelination and myelin repair in oligodendrocyte precursor cells. Acts as a hemostatic sensor of shear force: G protein-coupled receptor signaling is activated in response to shear force in platelets, promoting G(13) G protein signaling, and platelet shape change and aggregation in a COL3A1-dependent manner. Acts as an inhibitor of VEGFA production thereby inhibiting angiogenesis through a signaling pathway mediated by PRKCA. Plays a role in the maintenance of hematopoietic stem cells in bone marrow niche. Plays an essential role in testis development. The protein is Adhesion G-protein coupled receptor G1 (ADGRG1) of Macaca mulatta (Rhesus macaque).